A 397-amino-acid chain; its full sequence is Lysophospholipid transporter LplT (397 aa).

At 1 to 17 (MSESVHTNTSLWSKGMK) the chain is on the periplasmic side. A helical transmembrane segment spans residues 18 to 38 (AVIVAQFLSAFGDNALLFATL). Residues 39–52 (ALLKAQFYPEWSQP) are Cytoplasmic-facing. The chain crosses the membrane as a helical span at residues 53–73 (ILQMVFVGAYILFAPFVGQVA). The Periplasmic portion of the chain corresponds to 74–90 (DSFAKGRVMMFANGLKL). The chain crosses the membrane as a helical span at residues 91-111 (LGAASICFGINPFLGYTLVGV). Over 112 to 144 (GAAAYSPAKYGILGELTTGSKLVKANGLMEAST) the chain is Cytoplasmic. The chain crosses the membrane as a helical span at residues 145 to 165 (IAAILLGSVAGGVLADWHVLV). Ala-166 is a topological domain (periplasmic). Residues 167-187 (LAACALAYGGAVVANIYIPKL) form a helical membrane-spanning segment. At 188–226 (AAARPGQSWNLINMTRSFLNACTSLWRNGETRFSLVGTS) the chain is on the cytoplasmic side. Residues 227-247 (LFWGAGVTLRFLLVLWVPVAL) form a helical membrane-spanning segment. Topologically, residues 248-256 (GITDNSTPT) are periplasmic. The helical transmembrane segment at 257 to 277 (YLNAMVAIGIVVGAGAAAKLV) threads the bilayer. The Cytoplasmic portion of the chain corresponds to 278 to 280 (TLE). The chain crosses the membrane as a helical span at residues 281-301 (TVSRCMPAGILIGVVVLIFSL). Residues 302 to 304 (QHE) lie on the Periplasmic side of the membrane. The chain crosses the membrane as a helical span at residues 305-325 (LLPAYALLMLIGVMGGFFVVP). Residues 326–343 (LNALLQERGKKSVGAGNA) are Cytoplasmic-facing. Residues 344–364 (IAVQNLGENSAMLLMLGIYSL) form a helical membrane-spanning segment. Residues 365–366 (AV) are Periplasmic-facing. A helical transmembrane segment spans residues 367–387 (MVGIPVVPIGIGFGALFALAI). The Cytoplasmic segment spans residues 388–397 (TALWIWQRRH).

The protein belongs to the major facilitator superfamily. LplT (TC 2.A.1.42) family.

Its subcellular location is the cell inner membrane. Functionally, catalyzes the facilitated diffusion of 2-acyl-glycero-3-phosphoethanolamine (2-acyl-GPE) into the cell. The polypeptide is Lysophospholipid transporter LplT (Shigella boydii serotype 4 (strain Sb227)).